Reading from the N-terminus, the 533-residue chain is Dipeptide-binding protein (533 aa).

The first 24 residues, 1 to 24, serve as a signal peptide directing secretion; that stretch reads MRKILPLRAWLAAGLILGSPFSHA.

This sequence belongs to the bacterial solute-binding protein 5 family.

The protein localises to the periplasm. In terms of biological role, binds different dipeptides. Probably bind only L-amino acid containing dipeptides. The polypeptide is Dipeptide-binding protein (Pseudomonas aeruginosa (strain ATCC 15692 / DSM 22644 / CIP 104116 / JCM 14847 / LMG 12228 / 1C / PRS 101 / PAO1)).